The following is a 572-amino-acid chain: Oxygen-dependent choline dehydrogenase (572 aa).

Residue 9-38 (DYVIIGGGSAGSVLGARLSEDKDKNVLVLE) coordinates FAD. Residue His477 is the Proton acceptor of the active site.

It belongs to the GMC oxidoreductase family. FAD serves as cofactor.

The enzyme catalyses choline + A = betaine aldehyde + AH2. It carries out the reaction betaine aldehyde + NAD(+) + H2O = glycine betaine + NADH + 2 H(+). It participates in amine and polyamine biosynthesis; betaine biosynthesis via choline pathway; betaine aldehyde from choline (cytochrome c reductase route): step 1/1. Functionally, involved in the biosynthesis of the osmoprotectant glycine betaine. Catalyzes the oxidation of choline to betaine aldehyde and betaine aldehyde to glycine betaine at the same rate. This Staphylococcus epidermidis (strain ATCC 12228 / FDA PCI 1200) protein is Oxygen-dependent choline dehydrogenase.